Reading from the N-terminus, the 136-residue chain is Small ribosomal subunit protein uS8c (136 aa).

Belongs to the universal ribosomal protein uS8 family. Part of the 30S ribosomal subunit.

The protein resides in the plastid. The protein localises to the chloroplast. In terms of biological role, one of the primary rRNA binding proteins, it binds directly to 16S rRNA central domain where it helps coordinate assembly of the platform of the 30S subunit. This is Small ribosomal subunit protein uS8c (rps8) from Hordeum vulgare (Barley).